The following is a 381-amino-acid chain: 3-dehydroquinate synthase (381 aa).

NAD(+)-binding positions include 81–86 (EGESSK), 115–119 (GVIGD), 139–140 (TS), lysine 152, and lysine 161. Glutamate 194, histidine 256, and histidine 274 together coordinate Zn(2+).

This sequence belongs to the sugar phosphate cyclases superfamily. Dehydroquinate synthase family. The cofactor is Co(2+). Requires Zn(2+) as cofactor. It depends on NAD(+) as a cofactor.

The protein resides in the cytoplasm. It catalyses the reaction 7-phospho-2-dehydro-3-deoxy-D-arabino-heptonate = 3-dehydroquinate + phosphate. It functions in the pathway metabolic intermediate biosynthesis; chorismate biosynthesis; chorismate from D-erythrose 4-phosphate and phosphoenolpyruvate: step 2/7. Its function is as follows. Catalyzes the conversion of 3-deoxy-D-arabino-heptulosonate 7-phosphate (DAHP) to dehydroquinate (DHQ). The chain is 3-dehydroquinate synthase from Rhodopseudomonas palustris (strain TIE-1).